A 101-amino-acid polypeptide reads, in one-letter code: Protamine-3 (101 aa).

The tract at residues 1–101 is disordered; sequence MGSRCAKLST…PSPEPKQTHS (101 aa). Residues 45 to 67 show a composition bias toward acidic residues; that stretch reads EGEEEEEDEEEEEEEEEEEEEEQ. Ser93 carries the phosphoserine modification.

It belongs to the protamine P3 family. As to expression, testis.

It is found in the nucleus. The protein resides in the chromosome. In terms of biological role, protamines substitute for histones in the chromatin of sperm during the haploid phase of spermatogenesis. They compact sperm DNA into a highly condensed, stable and inactive complex. This is Protamine-3 (Prm3) from Mus musculus (Mouse).